A 167-amino-acid polypeptide reads, in one-letter code: Ribosome maturation factor RimM (167 aa).

One can recognise a PRC barrel domain in the interval 92 to 166 (DGVYYYRELL…EVRVELMEGL (75 aa)).

It belongs to the RimM family. In terms of assembly, binds ribosomal protein uS19.

The protein localises to the cytoplasm. Its function is as follows. An accessory protein needed during the final step in the assembly of 30S ribosomal subunit, possibly for assembly of the head region. Essential for efficient processing of 16S rRNA. May be needed both before and after RbfA during the maturation of 16S rRNA. It has affinity for free ribosomal 30S subunits but not for 70S ribosomes. The protein is Ribosome maturation factor RimM of Lactobacillus delbrueckii subsp. bulgaricus (strain ATCC 11842 / DSM 20081 / BCRC 10696 / JCM 1002 / NBRC 13953 / NCIMB 11778 / NCTC 12712 / WDCM 00102 / Lb 14).